The following is a 212-amino-acid chain: Large ribosomal subunit protein uL3 (212 aa).

Residue Gln153 is modified to N5-methylglutamine.

The protein belongs to the universal ribosomal protein uL3 family. In terms of assembly, part of the 50S ribosomal subunit. Forms a cluster with proteins L14 and L19. In terms of processing, methylated by PrmB.

One of the primary rRNA binding proteins, it binds directly near the 3'-end of the 23S rRNA, where it nucleates assembly of the 50S subunit. This is Large ribosomal subunit protein uL3 from Shewanella sediminis (strain HAW-EB3).